A 476-amino-acid polypeptide reads, in one-letter code: Protein transport protein Sec61 subunit alpha (476 aa).

Residues 2–33 (GIKFLEFIKPFCAVLPEIQKPERKIQFREKVL) are Cytoplasmic-facing. Residues 34 to 53 (WTAITLFIFLVCCQIPLFGI) form a helical membrane-spanning segment. Residues 54–76 (MSSDSADPFYWMRVILASNRGTL) lie on the Lumenal side of the membrane. The helical transmembrane segment at 77-96 (MELGISPIVTSGLIMQLLAG) threads the bilayer. The Cytoplasmic segment spans residues 97–117 (AKIIEVGDTPKDRALFNGAQK). A helical transmembrane segment spans residues 118-138 (LFGMIITIGQAIVYVMTGMYG). The Lumenal segment spans residues 139-144 (DPSEMG). A helical membrane pass occupies residues 145 to 165 (AGICLLIIIQLFVAGLIVLLL). The Cytoplasmic segment spans residues 166–172 (DELLQKG). The chain crosses the membrane as a helical span at residues 173–193 (YGLGSGISLFIATNICETIVW). The Lumenal portion of the chain corresponds to 194–240 (KAFSPTTVNTGRGTEFEGAIIALFHLLATRTDKVRALREAFYRQNLP). Residues 241–261 (NILNLIATVFVFAVVIYFQGF) traverse the membrane as a helical segment. Residues 262–288 (RVDLPIKSARYRGQYNTYPIKLFYTSN) lie on the Cytoplasmic side of the membrane. The chain crosses the membrane as a helical span at residues 289-309 (IPIILQSALVSNLYVISQMLS). Topologically, residues 310–354 (TRFSGNFLVNLLGTWSDATSGGPARAYPVAGLCYYLSPPESFGSV) are lumenal. Residues 355–375 (LDDPVHAAIYIVFMLGSCAFF) traverse the membrane as a helical segment. At 376–420 (SKTWIEVSGSSAKDVAKQLKEQQMVMRGHRETSMVHELNRYIPTA) the chain is on the cytoplasmic side. A helical membrane pass occupies residues 421–441 (AAFGGLCIGGLSVMADFLGAI). The Lumenal segment spans residues 442–445 (GSGT). Residues 446-462 (GILLAVTIIYQYFEIFV) form a helical membrane-spanning segment. The Cytoplasmic segment spans residues 463–476 (KEQSEMGSMGALLF).

This sequence belongs to the SecY/SEC61-alpha family. The SEC61 channel-forming translocon complex consists of channel-forming core components SEC61A1, SEC61B and SEC61G and different auxiliary components such as SEC62 and SEC63. The SEC61 channel associates with the multi-pass translocon (MPT) complex.

The protein localises to the endoplasmic reticulum membrane. Component of SEC61 channel-forming translocon complex that mediates transport of signal peptide-containing precursor polypeptides across the endoplasmic reticulum (ER). Forms a ribosome receptor and a gated pore in the ER membrane, both functions required for cotranslational translocation of nascent polypeptides. May cooperate with auxiliary protein SEC62, SEC63 and HSPA5/BiP to enable post-translational transport of small presecretory proteins. The SEC61 channel is also involved in ER membrane insertion of transmembrane proteins: it mediates membrane insertion of the first few transmembrane segments of proteins, while insertion of subsequent transmembrane regions of multi-pass membrane proteins is mediated by the multi-pass translocon (MPT) complex. In Notothenia angustata (Rockcod), this protein is Protein transport protein Sec61 subunit alpha (sec61a).